Consider the following 93-residue polypeptide: MKTLVLLSALILLAYQVQTDPIQNTDEETNTEEQPGEDDQAVSVSFGGQEGSALHEKLSRDLICLCRNRRCNRGELFYGTCAGPFLRCCRRRR.

Positions 1–19 are cleaved as a signal peptide; that stretch reads MKTLVLLSALILLAYQVQT. Positions 20–58 are excised as a propeptide; that stretch reads DPIQNTDEETNTEEQPGEDDQAVSVSFGGQEGSALHEKL. The segment at 22-43 is disordered; it reads IQNTDEETNTEEQPGEDDQAVS. The segment covering 25 to 40 has biased composition (acidic residues); it reads TDEETNTEEQPGEDDQ. 3 disulfides stabilise this stretch: C64–C89, C66–C81, and C71–C88.

It belongs to the alpha-defensin family.

Its subcellular location is the secreted. Its function is as follows. May have microbicidal activities. The sequence is that of Alpha-defensin 21 (Defa21) from Mus musculus (Mouse).